A 521-amino-acid chain; its full sequence is MLCALLLLPSLLGATRASPTSGPQECAKGSTVWCQDLQTAARCGAVGYCQGAVWNKPTAKSLPCDVCQDIAAAAGNGLNPDATESDILALVMKTCEWLPSQESSAGCKWMVDAHSSAILSMLRGAPDSAPAQVCTALSLCEPLQRHLATLRPLSKEDTFEAVAPFMANGPLTFHPRQAPEGALCQDCVRQVSRLQEAVRSNLTLADLNIQEQCESLGPGLAVLCKNYLFQFFVPADQALRLLPPQELCRKGGFCEELGAPARLTQVVAMDGVPSLELGLPRKQSEMQMKAGVTCEVCMNVVQKLDHWLMSNSSELMITHALERVCSVMPASITKECIILVDTYSPSLVQLVAKITPEKVCKFIRLCGNRRRARAVHDAYAIVPSPEWDAENQGSFCNGCKRLLTVSSHNLESKSTKRDILVAFKGGCSILPLPYMIQCKHFVTQYEPVLIESLKDMMDPVAVCKKVGACHGPRTPLLGTDQCALGPSFWCRSQEAAKLCNAVQHCQKHVWKEMHLHAGEHA.

The N-terminal stretch at 1-17 (MLCALLLLPSLLGATRA) is a signal peptide. The propeptide occupies 18–59 (SPTSGPQECAKGSTVWCQDLQTAARCGAVGYCQGAVWNKPTA). Residues 19-59 (PTSGPQECAKGSTVWCQDLQTAARCGAVGYCQGAVWNKPTA) enclose the Saposin A-type 1 domain. Saposin B-type domains lie at 60 to 144 (KSLP…EPLQ) and 180 to 258 (EGAL…EELG). Intrachain disulfides connect Cys-64–Cys-140, Cys-67–Cys-134, and Cys-95–Cys-107. A propeptide spanning residues 146–180 (HLATLRPLSKEDTFEAVAPFMANGPLTFHPRQAPE) is cleaved from the precursor. Cystine bridges form between Cys-184–Cys-254, Cys-187–Cys-248, and Cys-213–Cys-224. An N-linked (GlcNAc...) asparagine glycan is attached at Asn-201. Residues 259–288 (APARLTQVVAMDGVPSLELGLPRKQSEMQM) constitute a propeptide that is removed on maturation. Saposin B-type domains lie at 290 to 370 (AGVT…GNRR) and 392 to 473 (QGSF…HGPR). 3 disulfide bridges follow: Cys-294–Cys-366, Cys-297–Cys-360, and Cys-325–Cys-336. A glycan (N-linked (GlcNAc...) asparagine) is linked at Asn-311. The propeptide occupies 370–391 (RRARAVHDAYAIVPSPEWDAEN). Disulfide bonds link Cys-396-Cys-469, Cys-399-Cys-463, and Cys-427-Cys-438. The propeptide occupies 474-521 (TPLLGTDQCALGPSFWCRSQEAAKLCNAVQHCQKHVWKEMHLHAGEHA). The Saposin A-type 2 domain maps to 475-515 (PLLGTDQCALGPSFWCRSQEAAKLCNAVQHCQKHVWKEMHL).

It is found in the secreted. In terms of biological role, may activate the lysosomal degradation of sphingolipids. This Homo sapiens (Human) protein is Proactivator polypeptide-like 1 (PSAPL1).